The sequence spans 220 residues: Orotidine 5'-phosphate decarboxylase (220 aa).

Substrate-binding positions include Asp12, Lys34, 60–69 (DFKVADIPNT), Ser117, 170–180 (PGVGAQGGKAS), Gly193, and Arg194. The Proton donor role is filled by Lys62.

This sequence belongs to the OMP decarboxylase family. Type 1 subfamily. As to quaternary structure, homodimer.

It carries out the reaction orotidine 5'-phosphate + H(+) = UMP + CO2. The protein operates within pyrimidine metabolism; UMP biosynthesis via de novo pathway; UMP from orotate: step 2/2. Functionally, catalyzes the decarboxylation of orotidine 5'-monophosphate (OMP) to uridine 5'-monophosphate (UMP). The protein is Orotidine 5'-phosphate decarboxylase of Methanosarcina mazei (strain ATCC BAA-159 / DSM 3647 / Goe1 / Go1 / JCM 11833 / OCM 88) (Methanosarcina frisia).